The primary structure comprises 215 residues: Cytochrome b-c1 complex subunit Rieske, mitochondrial (215 aa).

The transit peptide at 1-22 (MLGIRSSVKTCFKPMSLTSKRL) directs the protein to the mitochondrion. A propeptide spans 23–30 (ISQSLLAS) (removed in mature form). Residues 31-50 (KSTYRTPNFDDVLKENNDAD) are Mitochondrial matrix-facing. Residues 51–80 (KGRSYAYFMVGAMGLLSSAGAKSTVETFIS) traverse the membrane as a helical segment. At 81-215 (SMTATADVLA…EFDGDKVIVG (135 aa)) the chain is on the mitochondrial intermembrane side. Positions 90–93 (AMAK) are hinge. A Rieske domain is found at 123–214 (PHEIQEANSV…YEFDGDKVIV (92 aa)). [2Fe-2S] cluster-binding residues include Cys-159, His-161, Cys-178, and His-181. Cys-164 and Cys-180 are joined by a disulfide.

Belongs to the Rieske iron-sulfur protein family. In terms of assembly, component of the ubiquinol-cytochrome c oxidoreductase (cytochrome b-c1 complex, complex III, CIII), a multisubunit enzyme composed of 10 subunits. The complex is composed of 3 respiratory subunits cytochrome b (COB), cytochrome c1 (CYT1) and Rieske protein (RIP1), 2 core protein subunits COR1 and QCR2, and 5 low-molecular weight protein subunits QCR6, QCR7, QCR8, QCR9 and QCR10. The complex exists as an obligatory dimer and forms supercomplexes (SCs) in the inner mitochondrial membrane with a monomer or a dimer of cytochrome c oxidase (complex IV, CIV), resulting in 2 different assemblies (supercomplexes III(2)IV and III(2)IV(2)). RIP1 interacts with QCR10 on the intermembrane space (IMS) side, and with QCR9. [2Fe-2S] cluster serves as cofactor. In terms of processing, processed by both the mitochondrial processing peptidase (MPP) and the mitochondrial intermediate protease (MIP). Initially, MPP removes 22 amino acids from the newly imported precursor in the mitochondrial matrix. This proteolytic processing is then followed by a second proteolytic cleavage by MIP, which removes an octapeptide to generate mature-sized RIP1.

Its subcellular location is the mitochondrion inner membrane. It catalyses the reaction a quinol + 2 Fe(III)-[cytochrome c](out) = a quinone + 2 Fe(II)-[cytochrome c](out) + 2 H(+)(out). Component of the ubiquinol-cytochrome c oxidoreductase, a multisubunit transmembrane complex that is part of the mitochondrial electron transport chain which drives oxidative phosphorylation. The respiratory chain contains 3 multisubunit complexes succinate dehydrogenase (complex II, CII), ubiquinol-cytochrome c oxidoreductase (cytochrome b-c1 complex, complex III, CIII) and cytochrome c oxidase (complex IV, CIV), that cooperate to transfer electrons derived from NADH and succinate to molecular oxygen, creating an electrochemical gradient over the inner membrane that drives transmembrane transport and the ATP synthase. The cytochrome b-c1 complex catalyzes electron transfer from ubiquinol to cytochrome c, linking this redox reaction to translocation of protons across the mitochondrial inner membrane, with protons being carried across the membrane as hydrogens on the quinol. In the process called Q cycle, 2 protons are consumed from the matrix, 4 protons are released into the intermembrane space and 2 electrons are passed to cytochrome c. The Rieske protein is a catalytic core subunit containing a [2Fe-2S] iron-sulfur cluster. It cycles between 2 conformational states during catalysis to transfer electrons from the quinol bound in the Q(0) site in cytochrome b (COB) to cytochrome c1 (CYT1). The polypeptide is Cytochrome b-c1 complex subunit Rieske, mitochondrial (RIP1) (Saccharomyces cerevisiae (strain ATCC 204508 / S288c) (Baker's yeast)).